The chain runs to 582 residues: DNA polymerase IV (582 aa).

The segment at 127–161 (NADDGQSSTDKESEISTDVESERNDDSNNKDMIQA) is disordered. The segment covering 135–155 (TDKESEISTDVESERNDDSNN) has biased composition (basic and acidic residues). Residues 360-369 (RGYSKCGDID) are involved in ssDNA binding. Aspartate 367, aspartate 369, and aspartate 502 together coordinate Mg(2+).

Belongs to the DNA polymerase type-X family. As to quaternary structure, interacts with DNL4 subunit of the DNL4-LIF1 complex. Mg(2+) is required as a cofactor.

Its subcellular location is the nucleus. The enzyme catalyses DNA(n) + a 2'-deoxyribonucleoside 5'-triphosphate = DNA(n+1) + diphosphate. Stimulated by the interaction with the DNL4-LIF1 complex. In terms of biological role, repair polymerase. Involved in gap-filling in DNA nonhomologous end joining (NHEJ) required for double-strand break repair. Seems to conduct DNA synthesis in a stepwise distributive fashion rather than in a processive fashion as for other DNA polymerases. Preferentially acts upon short gaps formed by the alignment of linear duplexes with complementary single-strand ends. Required for filling gaps that need removal of a 5'- or 3'-terminal mismatch, however lacks nuclease activities. This is DNA polymerase IV (POL4) from Saccharomyces cerevisiae (strain ATCC 204508 / S288c) (Baker's yeast).